Reading from the N-terminus, the 398-residue chain is Nicotinate phosphoribosyltransferase (398 aa).

A Phosphohistidine; by autocatalysis modification is found at H222.

This sequence belongs to the NAPRTase family. In terms of processing, transiently phosphorylated on a His residue during the reaction cycle. Phosphorylation strongly increases the affinity for substrates and increases the rate of nicotinate D-ribonucleotide production. Dephosphorylation regenerates the low-affinity form of the enzyme, leading to product release.

The enzyme catalyses nicotinate + 5-phospho-alpha-D-ribose 1-diphosphate + ATP + H2O = nicotinate beta-D-ribonucleotide + ADP + phosphate + diphosphate. It functions in the pathway cofactor biosynthesis; NAD(+) biosynthesis; nicotinate D-ribonucleotide from nicotinate: step 1/1. In terms of biological role, catalyzes the synthesis of beta-nicotinate D-ribonucleotide from nicotinate and 5-phospho-D-ribose 1-phosphate at the expense of ATP. This chain is Nicotinate phosphoribosyltransferase, found in Acidovorax ebreus (strain TPSY) (Diaphorobacter sp. (strain TPSY)).